The chain runs to 372 residues: Cyclin-dependent kinase 9 (372 aa).

In terms of domain architecture, Protein kinase spans 19-315 (YEKLAKIGQG…SDDALNHDFF (297 aa)). ATP is bound by residues 25–33 (IGQGTFGEV) and lysine 48. Residue aspartate 149 is the Proton acceptor of the active site. Positions 341–372 (PPRRRGGHMPQQPANQGRNPAATNQTEFDRVF) are disordered. Residues 352–366 (QPANQGRNPAATNQT) are compositionally biased toward polar residues.

This sequence belongs to the protein kinase superfamily. CMGC Ser/Thr protein kinase family. CDC2/CDKX subfamily. In terms of assembly, associates with cyclin-T to form P-TEFb. Also associates with cyclin-K.

Its subcellular location is the nucleus. It carries out the reaction L-seryl-[protein] + ATP = O-phospho-L-seryl-[protein] + ADP + H(+). The catalysed reaction is L-threonyl-[protein] + ATP = O-phospho-L-threonyl-[protein] + ADP + H(+). It catalyses the reaction [DNA-directed RNA polymerase] + ATP = phospho-[DNA-directed RNA polymerase] + ADP + H(+). Member of the cyclin-dependent kinase pair (CDK9/cyclin-T) complex, also called positive transcription elongation factor b (P-TEFb), which facilitates the transition from abortive to production elongation by phosphorylating the CTD (C-terminal domain) of the large subunit of RNA polymerase II (RNAP II), SUPT5H and RDBP. The CDK9/cyclin-K complex also has a kinase activity toward CTD of RNAP II and can substitute for P-TEFb in vitro. The chain is Cyclin-dependent kinase 9 (CDK9) from Gallus gallus (Chicken).